The sequence spans 472 residues: 3-isopropylmalate dehydratase large subunit (472 aa).

Residues C353, C414, and C417 each coordinate [4Fe-4S] cluster.

The protein belongs to the aconitase/IPM isomerase family. LeuC type 1 subfamily. As to quaternary structure, heterodimer of LeuC and LeuD. The cofactor is [4Fe-4S] cluster.

It catalyses the reaction (2R,3S)-3-isopropylmalate = (2S)-2-isopropylmalate. It participates in amino-acid biosynthesis; L-leucine biosynthesis; L-leucine from 3-methyl-2-oxobutanoate: step 2/4. Its function is as follows. Catalyzes the isomerization between 2-isopropylmalate and 3-isopropylmalate, via the formation of 2-isopropylmaleate. The chain is 3-isopropylmalate dehydratase large subunit from Psychrobacter arcticus (strain DSM 17307 / VKM B-2377 / 273-4).